The chain runs to 291 residues: Bifunctional protein FolD (291 aa).

NADP(+) is bound by residues 168–170 (GRG), T195, and I236.

Belongs to the tetrahydrofolate dehydrogenase/cyclohydrolase family. In terms of assembly, homodimer.

The catalysed reaction is (6R)-5,10-methylene-5,6,7,8-tetrahydrofolate + NADP(+) = (6R)-5,10-methenyltetrahydrofolate + NADPH. It catalyses the reaction (6R)-5,10-methenyltetrahydrofolate + H2O = (6R)-10-formyltetrahydrofolate + H(+). Its pathway is one-carbon metabolism; tetrahydrofolate interconversion. Its function is as follows. Catalyzes the oxidation of 5,10-methylenetetrahydrofolate to 5,10-methenyltetrahydrofolate and then the hydrolysis of 5,10-methenyltetrahydrofolate to 10-formyltetrahydrofolate. The polypeptide is Bifunctional protein FolD (Bifidobacterium longum subsp. infantis (strain ATCC 15697 / DSM 20088 / JCM 1222 / NCTC 11817 / S12)).